The following is a 94-amino-acid chain: MLQSNEYFSGKVKSIGFTSSSTGRASVGVMAEGEYTFGTAEPEEMTVVSGALKVLLPGTVDWKVYTAGDVFNVPGHSEFHLQIAEPTSYLCRYL.

This sequence belongs to the nucleoside phosphorylase PpnP family.

The catalysed reaction is a purine D-ribonucleoside + phosphate = a purine nucleobase + alpha-D-ribose 1-phosphate. It catalyses the reaction adenosine + phosphate = alpha-D-ribose 1-phosphate + adenine. It carries out the reaction cytidine + phosphate = cytosine + alpha-D-ribose 1-phosphate. The enzyme catalyses guanosine + phosphate = alpha-D-ribose 1-phosphate + guanine. The catalysed reaction is inosine + phosphate = alpha-D-ribose 1-phosphate + hypoxanthine. It catalyses the reaction thymidine + phosphate = 2-deoxy-alpha-D-ribose 1-phosphate + thymine. It carries out the reaction uridine + phosphate = alpha-D-ribose 1-phosphate + uracil. The enzyme catalyses xanthosine + phosphate = alpha-D-ribose 1-phosphate + xanthine. Catalyzes the phosphorolysis of diverse nucleosides, yielding D-ribose 1-phosphate and the respective free bases. Can use uridine, adenosine, guanosine, cytidine, thymidine, inosine and xanthosine as substrates. Also catalyzes the reverse reactions. This Salmonella arizonae (strain ATCC BAA-731 / CDC346-86 / RSK2980) protein is Pyrimidine/purine nucleoside phosphorylase.